Reading from the N-terminus, the 374-residue chain is MALRTVLVSDVPSLPDSVYGLSEGLELSKPTSFRLPGFSVIGHRGIGMNVLQSSDRRARGVKENSILSFNSAAKYPIDFIEFDVQVTKDDCPVIFHDDFIYSEENGIVNESRVTDLSLSEFLLYGPQKETEKIGKTLMRKSKEGKVLKWDVDLDDSLCTLQEAFEQVEQTLGFNIELKFDDQTVYEREFLVHILRSVLQVVSNYAKDRPVIFSSFQPDAAKLVRELQSTYPVFFLTDAGNEIHNDERRNSLEEAIQVCLEGGLQGIVSEVKGVFRNPAAISKIKESNLSLLTYGKLNNVGEAVYMQYVMGIDGVIVDFVEEIIESTTRMMIRPPPSSSPLPSPSKDDDVAITRPEFSQKEISFLLKLLSQLIQH.

Residues 38–326 form the GP-PDE domain; that stretch reads FSVIGHRGIG…DFVEEIIEST (289 aa). The interval 330–349 is disordered; sequence MIRPPPSSSPLPSPSKDDDV. The segment covering 332–342 has biased composition (pro residues); sequence RPPPSSSPLPS.

Belongs to the glycerophosphoryl diester phosphodiesterase family. In terms of tissue distribution, expressed in roots, shoots, flowers and siliques.

The catalysed reaction is a sn-glycero-3-phosphodiester + H2O = an alcohol + sn-glycerol 3-phosphate + H(+). The chain is Glycerophosphodiester phosphodiesterase GDPD2 from Arabidopsis thaliana (Mouse-ear cress).